A 154-amino-acid polypeptide reads, in one-letter code: Endoribonuclease YbeY (154 aa).

Zn(2+) contacts are provided by His114, His118, and His124.

The protein belongs to the endoribonuclease YbeY family. The cofactor is Zn(2+).

It localises to the cytoplasm. Single strand-specific metallo-endoribonuclease involved in late-stage 70S ribosome quality control and in maturation of the 3' terminus of the 16S rRNA. The protein is Endoribonuclease YbeY of Haemophilus influenzae (strain 86-028NP).